The primary structure comprises 136 residues: 5-hydroxyisourate hydrolase (136 aa).

A signal peptide spans M1 to A20. Substrate contacts are provided by H31, R69, and Y133.

Belongs to the transthyretin family. 5-hydroxyisourate hydrolase subfamily. As to quaternary structure, homotetramer.

Its subcellular location is the periplasm. It catalyses the reaction 5-hydroxyisourate + H2O = 5-hydroxy-2-oxo-4-ureido-2,5-dihydro-1H-imidazole-5-carboxylate + H(+). Its function is as follows. Catalyzes the hydrolysis of 5-hydroxyisourate (HIU) to 2-oxo-4-hydroxy-4-carboxy-5-ureidoimidazoline (OHCU). The chain is 5-hydroxyisourate hydrolase (hiuH) from Salmonella typhi.